We begin with the raw amino-acid sequence, 355 residues long: Inositol-tetrakisphosphate 1-kinase 4 (355 aa).

Lysine 65 lines the 1D-myo-inositol 1,3,4-trisphosphate pocket. Arginine 101 and lysine 146 together coordinate ATP. The ATP-grasp domain maps to 107 to 318; the sequence is VVSGLRTPVS…FFLEMLRGTR (212 aa). 1D-myo-inositol 1,3,4-trisphosphate-binding residues include histidine 157 and lysine 190. Residues 179 to 190 and serine 205 contribute to the ATP site; that span reads QEFVNHGGVLFK. The segment at 225–248 is disordered; it reads FANISNQPLPPPDDDGGAADDDTP. Residues 236-247 show a composition bias toward acidic residues; that stretch reads PDDDGGAADDDT. Mg(2+) is bound by residues aspartate 272, aspartate 289, and asparagine 291. Asparagine 291 is a binding site for 1D-myo-inositol 1,3,4-trisphosphate.

The protein belongs to the ITPK1 family. Monomer. It depends on Mg(2+) as a cofactor.

It carries out the reaction 1D-myo-inositol 3,4,5,6-tetrakisphosphate + ATP = 1D-myo-inositol 1,3,4,5,6-pentakisphosphate + ADP + H(+). It catalyses the reaction 1D-myo-inositol 1,3,4-trisphosphate + ATP = 1D-myo-inositol 1,3,4,5-tetrakisphosphate + ADP + H(+). The catalysed reaction is 1D-myo-inositol 1,3,4-trisphosphate + ATP = 1D-myo-inositol 1,3,4,6-tetrakisphosphate + ADP + H(+). Kinase that can phosphorylate various inositol polyphosphate such as Ins(3,4,5,6)P4 or Ins(1,3,4)P3 and participates in phytic acid biosynthesis in developing seeds. Phytic acid is the primary storage form of phosphorus in cereal grains and other plant seeds. The chain is Inositol-tetrakisphosphate 1-kinase 4 (ITPK4) from Oryza sativa subsp. indica (Rice).